The chain runs to 173 residues: MNLILVGFMGSGKTTVSTLLGEALQQPVYDLDDEVEKAACKPIPQIFADDGEASFRDLEHSALKEVVKRRQGILATGGGTPVAERNQRLLEHAQAPVILLTASPAETARRLGDGEGRPLASKLTPAELADLQDARRPAYDRCADLTIRTDKLSPTAVAKLIIAFLRIHQDQSA.

An ATP-binding site is contributed by 10-15 (GSGKTT). Threonine 14 provides a ligand contact to Mg(2+). Aspartate 32, arginine 56, and glycine 78 together coordinate substrate. Arginine 117 provides a ligand contact to ATP. Arginine 135 provides a ligand contact to substrate.

This sequence belongs to the shikimate kinase family. In terms of assembly, monomer. It depends on Mg(2+) as a cofactor.

The protein localises to the cytoplasm. The catalysed reaction is shikimate + ATP = 3-phosphoshikimate + ADP + H(+). The protein operates within metabolic intermediate biosynthesis; chorismate biosynthesis; chorismate from D-erythrose 4-phosphate and phosphoenolpyruvate: step 5/7. In terms of biological role, catalyzes the specific phosphorylation of the 3-hydroxyl group of shikimic acid using ATP as a cosubstrate. The protein is Shikimate kinase of Limosilactobacillus fermentum (strain NBRC 3956 / LMG 18251) (Lactobacillus fermentum).